A 342-amino-acid polypeptide reads, in one-letter code: Putative gluconeogenesis factor (342 aa).

The segment at 318 to 342 (SEPPVAATQEIPIDGGRPRGDDAWR) is disordered. Threonine 325 is subject to Phosphothreonine. A compositionally biased stretch (basic and acidic residues) spans 333 to 342 (GRPRGDDAWR).

Belongs to the gluconeogenesis factor family. In terms of processing, phosphorylated by PknA and/or PknB.

It localises to the cytoplasm. Functionally, required for morphogenesis under gluconeogenic growth conditions. The sequence is that of Putative gluconeogenesis factor from Mycobacterium tuberculosis (strain CDC 1551 / Oshkosh).